Reading from the N-terminus, the 32-residue chain is U3-ctenitoxin-Pk1a (32 aa).

3 cysteine pairs are disulfide-bonded: cysteine 3–cysteine 17, cysteine 10–cysteine 21, and cysteine 16–cysteine 30.

Belongs to the neurotoxin 17 (21C2) family. Expressed by the venom gland.

It localises to the secreted. Its function is as follows. May act as a neurotoxin. This is U3-ctenitoxin-Pk1a from Phoneutria keyserlingi (Brazilian wandering spider).